Here is a 501-residue protein sequence, read N- to C-terminus: Cytochrome P450 6j1 (501 aa).

A heme-binding site is contributed by C444.

This sequence belongs to the cytochrome P450 family. It depends on heme as a cofactor.

It is found in the endoplasmic reticulum membrane. The protein resides in the microsome membrane. This chain is Cytochrome P450 6j1 (CYP6J1), found in Blattella germanica (German cockroach).